The primary structure comprises 740 residues: E3 ubiquitin-protein ligase TRIM9 (740 aa).

Residues cysteine 7–cysteine 30 form an RING-type; degenerate zinc finger. Over residues glycine 64–alanine 73 the composition is skewed to gly residues. The segment at glycine 64 to aspartate 114 is disordered. Low complexity predominate over residues alanine 74–serine 105. Residues arginine 195 to proline 244 form a B box-type 1; atypical zinc finger. Residues cysteine 200, cysteine 203, cysteine 225, histidine 230, cysteine 255, histidine 258, cysteine 277, and histidine 283 each contribute to the Zn(2+) site. The B box-type 2 zinc-finger motif lies at glutamine 250–isoleucine 291. A coiled-coil region spans residues threonine 294–lysine 324. Residues leucine 399–isoleucine 459 enclose the COS domain. In terms of domain architecture, Fibronectin type-III spans alanine 474–valine 567. One can recognise a B30.2/SPRY domain in the interval asparagine 549–lysine 736.

It belongs to the TRIM/RBCC family. Interacts (via fibronectin type-III domain) with pico. Interacts (via SPRY domain) with netrin receptor fra.

The protein localises to the cell projection. Its subcellular location is the axon. It is found in the perikaryon. The catalysed reaction is S-ubiquitinyl-[E2 ubiquitin-conjugating enzyme]-L-cysteine + [acceptor protein]-L-lysine = [E2 ubiquitin-conjugating enzyme]-L-cysteine + N(6)-ubiquitinyl-[acceptor protein]-L-lysine.. It functions in the pathway protein modification; protein ubiquitination. E3 ubiquitin-protein ligase activity. During embryonic and larval development, regulates the pattern of axonal projections of class IV nociceptive sensory neurons (C4da) downstream of netrin receptor fra. Regulates fine-scale topography of C4da axon terminals upon neuronal activity. During eye development, consolidates the attachment of R8 photoreceptor growth cones to the target medulla layer, probably downstream of fra. The chain is E3 ubiquitin-protein ligase TRIM9 from Drosophila melanogaster (Fruit fly).